The chain runs to 146 residues: MLSPKKTKYRKQFKGRIHGTSKGGTLLNFGSYGLKAVEPERITARQIEAARRAITRQMKRQGRVWIRIFPDVPVTGKPAEVRMGKGKGAVDHWAARVAPGRIMFEIDGVPDDIAREALRLGAAKLPIRTRVVTRIDAGAALEAEAA.

Belongs to the universal ribosomal protein uL16 family. As to quaternary structure, part of the 50S ribosomal subunit.

In terms of biological role, binds 23S rRNA and is also seen to make contacts with the A and possibly P site tRNAs. The chain is Large ribosomal subunit protein uL16 from Caulobacter sp. (strain K31).